The chain runs to 176 residues: MDLPGLIHDFLLVFLGLGLILGGLGVVLLPNPIYSAFSLGLVFVCISLFYILSNSHFVAAAQLLIYVGAINVLIIFAVMFINGSEYSKDFHLWTVGDGITSVVCTSLFVSLITTIPDTSWYGIIWTTKANQIIEQDLISNSQQIGIHLSTDFFLPFEFISIILLVALIGAIAVARQ.

The next 5 membrane-spanning stretches (helical) occupy residues 10–30, 32–52, 61–81, 92–112, and 152–172; these read FLLV…VLLP, PIYS…FYIL, AQLL…VMFI, LWTV…VSLI, and FFLP…GAIA.

This sequence belongs to the complex I subunit 6 family. In terms of assembly, NDH is composed of at least 16 different subunits, 5 of which are encoded in the nucleus.

It localises to the plastid. The protein resides in the chloroplast thylakoid membrane. The catalysed reaction is a plastoquinone + NADH + (n+1) H(+)(in) = a plastoquinol + NAD(+) + n H(+)(out). The enzyme catalyses a plastoquinone + NADPH + (n+1) H(+)(in) = a plastoquinol + NADP(+) + n H(+)(out). In terms of biological role, NDH shuttles electrons from NAD(P)H:plastoquinone, via FMN and iron-sulfur (Fe-S) centers, to quinones in the photosynthetic chain and possibly in a chloroplast respiratory chain. The immediate electron acceptor for the enzyme in this species is believed to be plastoquinone. Couples the redox reaction to proton translocation, and thus conserves the redox energy in a proton gradient. This chain is NAD(P)H-quinone oxidoreductase subunit 6, chloroplastic (ndhG), found in Lactuca sativa (Garden lettuce).